Reading from the N-terminus, the 131-residue chain is Large ribosomal subunit protein bL17 (131 aa).

The protein belongs to the bacterial ribosomal protein bL17 family. In terms of assembly, part of the 50S ribosomal subunit. Contacts protein L32.

The sequence is that of Large ribosomal subunit protein bL17 from Bordetella avium (strain 197N).